The primary structure comprises 539 residues: Glucose-6-phosphate isomerase (539 aa).

Residue E349 is the Proton donor of the active site. Active-site residues include H380 and K508.

This sequence belongs to the GPI family.

Its subcellular location is the cytoplasm. It carries out the reaction alpha-D-glucose 6-phosphate = beta-D-fructose 6-phosphate. It functions in the pathway carbohydrate biosynthesis; gluconeogenesis. Its pathway is carbohydrate degradation; glycolysis; D-glyceraldehyde 3-phosphate and glycerone phosphate from D-glucose: step 2/4. Catalyzes the reversible isomerization of glucose-6-phosphate to fructose-6-phosphate. The chain is Glucose-6-phosphate isomerase from Caulobacter sp. (strain K31).